Reading from the N-terminus, the 942-residue chain is Exopolysaccharide phosphotransferase SCO2592 (942 aa).

Belongs to the stealth family.

The protein is Exopolysaccharide phosphotransferase SCO2592 of Streptomyces coelicolor (strain ATCC BAA-471 / A3(2) / M145).